Consider the following 529-residue polypeptide: tRNA (uracil-O(2)-)-methyltransferase (529 aa).

A disordered region spans residues 78-107; that stretch reads IFDTHEGPVDDDKKDTDKDKNTPVPPNLQD. The span at 80-98 shows a compositional bias: basic and acidic residues; sequence DTHEGPVDDDKKDTDKDKN.

The protein belongs to the TRM44 family.

The protein resides in the cytoplasm. It carries out the reaction uridine(44) in tRNA(Ser) + S-adenosyl-L-methionine = 2'-O-methyluridine(44) in tRNA(Ser) + S-adenosyl-L-homocysteine + H(+). Functionally, probable adenosyl-L-methionine (AdoMet)-dependent tRNA (uracil-O(2)-)-methyltransferase. The polypeptide is tRNA (uracil-O(2)-)-methyltransferase (TRM44) (Yarrowia lipolytica (strain CLIB 122 / E 150) (Yeast)).